A 980-amino-acid chain; its full sequence is BEM1-interacting protein 1 (980 aa).

The SH3 domain occupies 13 to 77 (KSFPLYIAVN…PAVFTKRIAI (65 aa)). Ser-104, Ser-106, and Ser-128 each carry phosphoserine. A disordered region spans residues 139–163 (SGSVEQEVSKSPTRVPEVSTPQLQD). The span at 141 to 150 (SVEQEVSKSP) shows a compositional bias: polar residues. Thr-151 and Thr-158 each carry phosphothreonine. Residue Ser-209 is modified to Phosphoserine. In terms of domain architecture, SAM spans 228-292 (WSPEEVTDYF…FKEIRNIKSA (65 aa)). Disordered regions lie at residues 333 to 356 (SKCN…ELQR) and 390 to 438 (IFES…KNKN). Phosphoserine occurs at positions 393 and 412. Residues 397 to 412 (APKPPSYPSPVQPPQS) show a composition bias toward pro residues. Residues 415 to 438 (FNNRYTNNNARFPPQTTYPPKNKN) are compositionally biased toward polar residues. 2 positions are modified to phosphoserine: Ser-525 and Ser-528. Residues 544–762 (SSFDEEETKQ…AKKQQTSAFT (219 aa)) form a disordered region. A compositionally biased stretch (basic and acidic residues) spans 573–582 (HSRDASLSEM). Phosphoserine occurs at positions 589, 590, and 593. Low complexity-rich tracts occupy residues 589-608 (SSIL…SPTK) and 621-638 (HSRS…QSYS). 2 positions are modified to phosphoserine: Ser-644 and Ser-655. 2 stretches are compositionally biased toward polar residues: residues 645–662 (LVTS…SKSN) and 669–683 (ETPT…VSQP). The span at 687-703 (KHKHKHKHKSKHKHKNS) shows a compositional bias: basic residues. Ser-735 is modified (phosphoserine). Residues 737–746 (SELTQKSTKS) show a composition bias toward polar residues. In terms of domain architecture, PH spans 776–895 (TADCSGWMSK…WLSAIIKATI (120 aa)). Thr-919 carries the phosphothreonine modification. The interval 930 to 980 (LRDAEEEEGRDQFGWDDTQNKRNSNYPIEQDQFETSDYLESSAFEYPGGRL) is disordered. The span at 950 to 968 (KRNSNYPIEQDQFETSDYL) shows a compositional bias: polar residues.

As to quaternary structure, interacts with BEM1.

The protein resides in the bud. It is found in the bud neck. Its function is as follows. Functions redundantly with BOI2 to promote the fusion of secretory vesicles with the plasma membrane at sites of polarized growth. This is BEM1-interacting protein 1 from Saccharomyces cerevisiae (strain ATCC 204508 / S288c) (Baker's yeast).